The sequence spans 162 residues: ATP synthase subunit b (162 aa).

Residues 6–25 (TLFTLVTFLVLMLAVGKVAW) traverse the membrane as a helical segment.

This sequence belongs to the ATPase B chain family. As to quaternary structure, F-type ATPases have 2 components, F(1) - the catalytic core - and F(0) - the membrane proton channel. F(1) has five subunits: alpha(3), beta(3), gamma(1), delta(1), epsilon(1). F(0) has three main subunits: a(1), b(2) and c(10-14). The alpha and beta chains form an alternating ring which encloses part of the gamma chain. F(1) is attached to F(0) by a central stalk formed by the gamma and epsilon chains, while a peripheral stalk is formed by the delta and b chains.

It is found in the cell membrane. F(1)F(0) ATP synthase produces ATP from ADP in the presence of a proton or sodium gradient. F-type ATPases consist of two structural domains, F(1) containing the extramembraneous catalytic core and F(0) containing the membrane proton channel, linked together by a central stalk and a peripheral stalk. During catalysis, ATP synthesis in the catalytic domain of F(1) is coupled via a rotary mechanism of the central stalk subunits to proton translocation. Functionally, component of the F(0) channel, it forms part of the peripheral stalk, linking F(1) to F(0). This chain is ATP synthase subunit b, found in Lacticaseibacillus paracasei (strain ATCC 334 / BCRC 17002 / CCUG 31169 / CIP 107868 / KCTC 3260 / NRRL B-441) (Lactobacillus paracasei).